We begin with the raw amino-acid sequence, 67 residues long: UPF0434 protein Reut_A0592 (67 aa).

This sequence belongs to the UPF0434 family.

The polypeptide is UPF0434 protein Reut_A0592 (Cupriavidus pinatubonensis (strain JMP 134 / LMG 1197) (Cupriavidus necator (strain JMP 134))).